Consider the following 263-residue polypeptide: MIDPSAKIHPSAIIHPNAVIGANVEIGAFTCVEDEVEIGEGTWVGSHVLIKGPTKIGRNNKIFQFSSIGEDCQDKKYAGERTFLEIGDANVIREHCTFHRGTVQDQSLTKVGSRNLFMVNVHVAHDCMIGDDCIFANNATLAGHVHIGDWVIFGGLAAIHQFGRVGSHAFIAGMAALNKDVPPYVMAAGHYATPFGINSEGLRRRGFSAEAISAVKRAYKELYRSGKTIDEVMPVLETMAQDEPAVALFVEFLKKNERGIIRP.

Belongs to the transferase hexapeptide repeat family. LpxA subfamily. In terms of assembly, homotrimer.

It localises to the cytoplasm. The enzyme catalyses a (3R)-hydroxyacyl-[ACP] + UDP-N-acetyl-alpha-D-glucosamine = a UDP-3-O-[(3R)-3-hydroxyacyl]-N-acetyl-alpha-D-glucosamine + holo-[ACP]. Its pathway is glycolipid biosynthesis; lipid IV(A) biosynthesis; lipid IV(A) from (3R)-3-hydroxytetradecanoyl-[acyl-carrier-protein] and UDP-N-acetyl-alpha-D-glucosamine: step 1/6. Functionally, involved in the biosynthesis of lipid A, a phosphorylated glycolipid that anchors the lipopolysaccharide to the outer membrane of the cell. In Tolumonas auensis (strain DSM 9187 / NBRC 110442 / TA 4), this protein is Acyl-[acyl-carrier-protein]--UDP-N-acetylglucosamine O-acyltransferase.